The sequence spans 101 residues: NAD(P)H-quinone oxidoreductase subunit 4L, chloroplastic (101 aa).

The next 3 helical transmembrane spans lie at 2–22 (MLEY…YGLI), 32–52 (MCLE…SYFF), and 61–81 (IFSI…LAIV).

It belongs to the complex I subunit 4L family. NDH is composed of at least 16 different subunits, 5 of which are encoded in the nucleus.

The protein resides in the plastid. Its subcellular location is the chloroplast thylakoid membrane. It carries out the reaction a plastoquinone + NADH + (n+1) H(+)(in) = a plastoquinol + NAD(+) + n H(+)(out). The catalysed reaction is a plastoquinone + NADPH + (n+1) H(+)(in) = a plastoquinol + NADP(+) + n H(+)(out). Functionally, NDH shuttles electrons from NAD(P)H:plastoquinone, via FMN and iron-sulfur (Fe-S) centers, to quinones in the photosynthetic chain and possibly in a chloroplast respiratory chain. The immediate electron acceptor for the enzyme in this species is believed to be plastoquinone. Couples the redox reaction to proton translocation, and thus conserves the redox energy in a proton gradient. The polypeptide is NAD(P)H-quinone oxidoreductase subunit 4L, chloroplastic (Ipomoea purpurea (Common morning glory)).